Here is a 394-residue protein sequence, read N- to C-terminus: Proliferation-associated protein 2G4 (394 aa).

At S2 the chain carries N-acetylserine. Residue S2 is modified to Phosphoserine. Residues 2–48 (SGEDEQQEQTIAEDLVVTKYKMGGDIANRVLRSLVEASSSGVSVLSL) form a necessary for nucleolar localization region. Residues 46-54 (LSLCEKGDA) are RNA-binding. A Glycyl lysine isopeptide (Lys-Gly) (interchain with G-Cter in SUMO2) cross-link involves residue K298. The necessary for nucleolar localization stretch occupies residues 301-394 (LLQPFNVLYE…ETLEENGAGD (94 aa)). S335 is subject to Phosphoserine. The interval 358-394 (LQSSASRKTQKKKKKKASKTVENATSGETLEENGAGD) is disordered. S361 is subject to Phosphoserine; by PKC/PRKCD. Residues 361–375 (SASRKTQKKKKKKAS) form an interaction with RNA region. The segment covering 365-375 (KTQKKKKKKAS) has biased composition (basic residues). 2 positions are modified to phosphothreonine: T366 and T386.

The protein belongs to the peptidase M24 family. Isoform 2 interacts with the cytoplasmic domain of non-phosphorylated ERBB3; the interaction requires PKC activity. Interacts with AR. Treatment with HRG leads to dissociation from ERBB3 and increases association with AR. Interacts with nucleolin/NCL. Component of a ribonucleoprotein complex containing at least PA2G4, NCL, TOP1, PABPC2, RPLP0, acetylated histone H1 (HIST1H1A or H1F1), histone H1 2/4, RPL4, RPL8, RPL15, RPL18, RPL18A, RPL21, RPL11, RPL12, RPL28, RPL27, RPLP2 and RPL24. Interacts with HDAC2. Interacts with RB1; the interaction is enhanced upon PA2G4 dephosphorylation. Interacts with AKT1. Isoform 1 and isoform 2 interact with RNF20. Isoform 2 interacts with HUWE1. Interacts with DNAJC21. Phosphorylated on serine and threonine residues. Phosphorylation is enhanced by HRG treatment. Basal phosphorylation is PKC-dependent and HRG-induced phosphorylation is predominantly PKC-independent. Phosphorylation at Ser-361 by PKC/PRKCD regulates its nucleolar localization. In terms of processing, isoform 2 is polyubiquitinated, leading to proteasomal degradation and phosphorylation by PKC/PRKCD enhances polyubiquitination. Widely expressed.

The protein resides in the cytoplasm. It localises to the nucleus. The protein localises to the nucleolus. In terms of biological role, may play a role in a ERBB3-regulated signal transduction pathway. Seems be involved in growth regulation. Acts a corepressor of the androgen receptor (AR) and is regulated by the ERBB3 ligand neuregulin-1/heregulin (HRG). Inhibits transcription of some E2F1-regulated promoters, probably by recruiting histone acetylase (HAT) activity. Binds RNA. Associates with 28S, 18S and 5.8S mature rRNAs, several rRNA precursors and probably U3 small nucleolar RNA. May be involved in regulation of intermediate and late steps of rRNA processing. May be involved in ribosome assembly. Mediates cap-independent translation of specific viral IRESs (internal ribosomal entry site). Together with PTBP1 is required for the translation initiation on the foot-and-mouth disease virus (FMDV) IRES. Regulates cell proliferation, differentiation, and survival. Isoform 1 suppresses apoptosis whereas isoform 2 promotes cell differentiation. In Mus musculus (Mouse), this protein is Proliferation-associated protein 2G4 (Pa2g4).